A 447-amino-acid chain; its full sequence is Phosphoglucosamine mutase (447 aa).

The Phosphoserine intermediate role is filled by S102. Mg(2+) is bound by residues S102, D241, D243, and D245. S102 is subject to Phosphoserine.

The protein belongs to the phosphohexose mutase family. Mg(2+) is required as a cofactor. Post-translationally, activated by phosphorylation.

The catalysed reaction is alpha-D-glucosamine 1-phosphate = D-glucosamine 6-phosphate. Its function is as follows. Catalyzes the conversion of glucosamine-6-phosphate to glucosamine-1-phosphate. The chain is Phosphoglucosamine mutase from Pseudomonas savastanoi pv. phaseolicola (strain 1448A / Race 6) (Pseudomonas syringae pv. phaseolicola (strain 1448A / Race 6)).